Here is a 78-residue protein sequence, read N- to C-terminus: Acyl carrier protein (78 aa).

The 76-residue stretch at 2 to 77 folds into the Carrier domain; the sequence is SEIAQKVKSI…QAIAYLEQHV (76 aa). S37 is subject to O-(pantetheine 4'-phosphoryl)serine.

This sequence belongs to the acyl carrier protein (ACP) family. In terms of processing, 4'-phosphopantetheine is transferred from CoA to a specific serine of apo-ACP by AcpS. This modification is essential for activity because fatty acids are bound in thioester linkage to the sulfhydryl of the prosthetic group.

Its subcellular location is the cytoplasm. The protein operates within lipid metabolism; fatty acid biosynthesis. Carrier of the growing fatty acid chain in fatty acid biosynthesis. The sequence is that of Acyl carrier protein from Cytophaga hutchinsonii (strain ATCC 33406 / DSM 1761 / CIP 103989 / NBRC 15051 / NCIMB 9469 / D465).